Consider the following 757-residue polypeptide: Cartilage oligomeric matrix protein (757 aa).

The signal sequence occupies residues 1 to 20 (MVPDTACVLLLTLAALGASG). The segment at 22–86 (GQSPLGSDLG…SVRTGLPSVR (65 aa)) is COMP N-terminal. The 40-residue stretch at 87–126 (PLLHCAPGFCFPGVACIQTESGARCGPCPAGFTGNGSHCT) folds into the EGF-like 1 domain. Disulfide bonds link C91–C102, C96–C111, C114–C125, C131–C142, C136–C151, C154–C178, C184–C197, C191–C206, C209–C221, C229–C243, C237–C253, C255–C266, C282–C287, C292–C312, C328–C348, C351–C371, C387–C407, C410–C430, C448–C468, C484–C504, and C520–C741. A glycan (N-linked (GlcNAc...) asparagine) is linked at N121. The 53-residue stretch at 127-179 (DVNECNAHPCFPRVRCINTSPGFRCEACPPGYSGPTHQGVGLAFAKANKQVCT) folds into the EGF-like 2; calcium-binding domain. The EGF-like 3; calcium-binding domain occupies 180-222 (DINECETGQHNCVPNSVCINTRGSFQCGPCQPGFVGDQASGCQ). The EGF-like 4 domain maps to 225–267 (AQRFCPDGSPSECHEHADCVLERDGSRSCVCAVGWAGNGILCG). TSP type-3 repeat units lie at residues 268–300 (RDTD…NSGQ), 301–336 (EDVD…NPDQ), 337–359 (RNTD…NDDQ), 360–395 (KDTD…NSDQ), 396–418 (KDSD…NPDQ), 419–456 (ADVD…NSAQ), 457–492 (EDSD…NPGQ), and 493–528 (EDAD…EVTL). The tract at residues 298-503 (SGQEDVDRDG…DADRDGVGDV (206 aa)) is disordered. Composition is skewed to basic and acidic residues over residues 334-346 (PDQR…KWGD) and 352-370 (RSQK…RGDA). The short motif at 367-369 (RGD) is the Cell attachment site element. A compositionally biased stretch (acidic residues) spans 467–476 (ACDDDDDNDG). A mediates cell survival and induction of the IAP family of survival proteins region spans residues 527-757 (TLTDFRAFQT…DYETHQLRQA (231 aa)). In terms of domain architecture, TSP C-terminal spans 532 to 746 (RAFQTVVLDP…LRYRCNDTIP (215 aa)). Residue N742 is glycosylated (N-linked (GlcNAc...) asparagine).

The protein belongs to the thrombospondin family. Pentamer; disulfide-linked. Exists in a more compact conformation in the presence of calcium and shows a more extended conformation in the absence of calcium. Interacts with ITGB3, ITGA5 and FN1. Binding to FN1 requires the presence of divalent cations (Ca(2+), Mg(2+) or Mn(2+)). The greatest amount of binding is seen in the presence of Mn(2+). Interacts with MATN1, MATN3, MATN4 and ACAN. Binds heparin, heparan sulfate and chondroitin sulfate. EDTA dimishes significantly its binding to ACAN and abolishes its binding to MATN3, MATN4 and chondroitin sulfate. Interacts with collagen I, II and IX, and interaction with these collagens is dependent on the presence of zinc ions. Interacts with ADAMTS12. Interacts with ITGA7. Ca(2+) is required as a cofactor. In terms of processing, proteolytically cleaved by metalloproteases ADAMTS4 and ADAMTS1 with ADAMTS4 showing more potent activity. In terms of tissue distribution, abundantly expressed in the chondrocyte extracellular matrix, and is also found in bone, tendon, ligament and synovium and blood vessels. Increased amounts are produced during late stages of osteoarthritis in the area adjacent to the main defect.

Its subcellular location is the secreted. It localises to the extracellular space. It is found in the extracellular matrix. Its function is as follows. Plays a role in the structural integrity of cartilage via its interaction with other extracellular matrix proteins such as the collagens and fibronectin. Can mediate the interaction of chondrocytes with the cartilage extracellular matrix through interaction with cell surface integrin receptors. Could play a role in the pathogenesis of osteoarthritis. Potent suppressor of apoptosis in both primary chondrocytes and transformed cells. Suppresses apoptosis by blocking the activation of caspase-3 and by inducing the IAP family of survival proteins (BIRC3, BIRC2, BIRC5 and XIAP). Essential for maintaining a vascular smooth muscle cells (VSMCs) contractile/differentiated phenotype under physiological and pathological stimuli. Maintains this phenotype of VSMCs by interacting with ITGA7. This is Cartilage oligomeric matrix protein from Homo sapiens (Human).